Reading from the N-terminus, the 368-residue chain is Chaperone protein DnaJ (368 aa).

In terms of domain architecture, J spans 5–69 (DYYEVLGVAR…NQRARYDQFG (65 aa)). The CR-type zinc-finger motif lies at 125–207 (GVEKVITIPV…CRGAGRVRKN (83 aa)). The Zn(2+) site is built by Cys138, Cys141, Cys155, Cys158, Cys181, Cys184, Cys195, and Cys198. CXXCXGXG motif repeat units follow at residues 138 to 145 (CGTCHGSG), 155 to 162 (CKRCGGSG), 181 to 188 (CSTCHGRG), and 195 to 202 (CETCRGAG).

This sequence belongs to the DnaJ family. In terms of assembly, homodimer. Zn(2+) is required as a cofactor.

It localises to the cytoplasm. Functionally, participates actively in the response to hyperosmotic and heat shock by preventing the aggregation of stress-denatured proteins and by disaggregating proteins, also in an autonomous, DnaK-independent fashion. Unfolded proteins bind initially to DnaJ; upon interaction with the DnaJ-bound protein, DnaK hydrolyzes its bound ATP, resulting in the formation of a stable complex. GrpE releases ADP from DnaK; ATP binding to DnaK triggers the release of the substrate protein, thus completing the reaction cycle. Several rounds of ATP-dependent interactions between DnaJ, DnaK and GrpE are required for fully efficient folding. Also involved, together with DnaK and GrpE, in the DNA replication of plasmids through activation of initiation proteins. The chain is Chaperone protein DnaJ from Exiguobacterium sibiricum (strain DSM 17290 / CCUG 55495 / CIP 109462 / JCM 13490 / 255-15).